A 130-amino-acid chain; its full sequence is Small ribosomal subunit protein uS9 (130 aa).

The protein belongs to the universal ribosomal protein uS9 family.

This chain is Small ribosomal subunit protein uS9, found in Delftia acidovorans (strain DSM 14801 / SPH-1).